A 334-amino-acid polypeptide reads, in one-letter code: Aspartate carbamoyltransferase catalytic subunit (334 aa).

Positions 70 and 71 each coordinate carbamoyl phosphate. Lys-98 lines the L-aspartate pocket. Residues Arg-120, His-150, and Gln-153 each contribute to the carbamoyl phosphate site. Residues Arg-183 and Arg-238 each contribute to the L-aspartate site. Carbamoyl phosphate contacts are provided by Gly-279 and Pro-280.

The protein belongs to the aspartate/ornithine carbamoyltransferase superfamily. ATCase family. In terms of assembly, heterododecamer (2C3:3R2) of six catalytic PyrB chains organized as two trimers (C3), and six regulatory PyrI chains organized as three dimers (R2).

The enzyme catalyses carbamoyl phosphate + L-aspartate = N-carbamoyl-L-aspartate + phosphate + H(+). It participates in pyrimidine metabolism; UMP biosynthesis via de novo pathway; (S)-dihydroorotate from bicarbonate: step 2/3. Catalyzes the condensation of carbamoyl phosphate and aspartate to form carbamoyl aspartate and inorganic phosphate, the committed step in the de novo pyrimidine nucleotide biosynthesis pathway. The chain is Aspartate carbamoyltransferase catalytic subunit from Marinomonas sp. (strain MWYL1).